We begin with the raw amino-acid sequence, 154 residues long: SsrA-binding protein (154 aa).

The protein belongs to the SmpB family.

The protein localises to the cytoplasm. In terms of biological role, required for rescue of stalled ribosomes mediated by trans-translation. Binds to transfer-messenger RNA (tmRNA), required for stable association of tmRNA with ribosomes. tmRNA and SmpB together mimic tRNA shape, replacing the anticodon stem-loop with SmpB. tmRNA is encoded by the ssrA gene; the 2 termini fold to resemble tRNA(Ala) and it encodes a 'tag peptide', a short internal open reading frame. During trans-translation Ala-aminoacylated tmRNA acts like a tRNA, entering the A-site of stalled ribosomes, displacing the stalled mRNA. The ribosome then switches to translate the ORF on the tmRNA; the nascent peptide is terminated with the 'tag peptide' encoded by the tmRNA and targeted for degradation. The ribosome is freed to recommence translation, which seems to be the essential function of trans-translation. The chain is SsrA-binding protein from Treponema pallidum (strain Nichols).